The sequence spans 160 residues: MNDDKTERPVKTANQRGAARLAAVQALYQMDVGGTGVLEIVAEYEAHRLGQEIDGETYLKADAAWFRSIVSGVVRDQVRLDPLIAAALQDDWALSRLDSTVRAILRAGVFEITDRKDVPVAVIVTEYVEIAQAFFDDDEPKLVNAVLDRIAKQVRGEPKK.

Belongs to the NusB family.

Functionally, involved in transcription antitermination. Required for transcription of ribosomal RNA (rRNA) genes. Binds specifically to the boxA antiterminator sequence of the ribosomal RNA (rrn) operons. In Rhizobium johnstonii (strain DSM 114642 / LMG 32736 / 3841) (Rhizobium leguminosarum bv. viciae), this protein is Transcription antitermination protein NusB.